The following is a 281-amino-acid chain: NADPH-dependent 7-cyano-7-deazaguanine reductase (281 aa).

87-89 is a binding site for substrate; it reads VES. 89-90 provides a ligand contact to NADPH; the sequence is SK. Cys-188 acts as the Thioimide intermediate in catalysis. Asp-195 functions as the Proton donor in the catalytic mechanism. 227–228 lines the substrate pocket; sequence HE. 256 to 257 contacts NADPH; that stretch reads RG.

Belongs to the GTP cyclohydrolase I family. QueF type 2 subfamily. In terms of assembly, homodimer.

The protein resides in the cytoplasm. It catalyses the reaction 7-aminomethyl-7-carbaguanine + 2 NADP(+) = 7-cyano-7-deazaguanine + 2 NADPH + 3 H(+). It participates in tRNA modification; tRNA-queuosine biosynthesis. Functionally, catalyzes the NADPH-dependent reduction of 7-cyano-7-deazaguanine (preQ0) to 7-aminomethyl-7-deazaguanine (preQ1). The chain is NADPH-dependent 7-cyano-7-deazaguanine reductase from Aliivibrio salmonicida (strain LFI1238) (Vibrio salmonicida (strain LFI1238)).